The sequence spans 781 residues: Serine/threonine-protein kinase PLK4 (781 aa).

Residues 14-268 enclose the Protein kinase domain; the sequence is YEVQHLLGKG…LEQVLRHPFM (255 aa). ATP is bound by residues 20-28 and K43; that span reads LGKGGFACV. Catalysis depends on D139, which acts as the Proton acceptor. Residues 397–514 enclose the Cryptic POLO box 1 (CPB1) domain; that stretch reads TEHISVPPLN…ARFVGLVKSK (118 aa). Residues 463 to 486 form a disordered region; sequence QPDPGRGLPIQEQTSETHSSGTDN. Residues 473 to 486 are compositionally biased toward polar residues; it reads QEQTSETHSSGTDN. Residues 515–618 enclose the Cryptic POLO box 2 (CPB2) domain; the sequence is TPKVTYFSAL…GRRPVVEVLP (104 aa). In terms of domain architecture, POLO box spans 672–751; the sequence is PIKRLNVPGV…LPQVQMKLRC (80 aa).

Belongs to the protein kinase superfamily. Ser/Thr protein kinase family. CDC5/Polo subfamily. In terms of assembly, homodimer. Post-translationally, ubiquitinated by the SCF(Slimb) ubiquitin ligase complex; leading to its degradation by the proteasome during interphase and regulating centriole number and ensuring the block to centriole reduplication.

The protein resides in the cytoplasm. It is found in the cytoskeleton. The protein localises to the microtubule organizing center. It localises to the centrosome. Its subcellular location is the centriole. The catalysed reaction is L-seryl-[protein] + ATP = O-phospho-L-seryl-[protein] + ADP + H(+). It catalyses the reaction L-threonyl-[protein] + ATP = O-phospho-L-threonyl-[protein] + ADP + H(+). Its function is as follows. Serine/threonine-protein kinase that plays a central role in centriole duplication. Able to trigger procentriole formation on the surface of the mother centriole cylinder, using mother centriole as a platform, leading to the recruitment of centriole biogenesis proteins such as sas-6. When overexpressed, it is able to induce centrosome amplification through the simultaneous generation of multiple procentrioles adjoining each parental centriole during S phase. Centrosome amplification following overexpression can initiate tumorigenesis, highlighting the importance of centrosome regulation in cancers. The chain is Serine/threonine-protein kinase PLK4 (SAK) from Drosophila virilis (Fruit fly).